Here is a 106-residue protein sequence, read N- to C-terminus: Large ribosomal subunit protein eL42 (106 aa).

This sequence belongs to the eukaryotic ribosomal protein eL42 family.

The chain is Large ribosomal subunit protein eL42 (RPL44) from Meyerozyma guilliermondii (strain ATCC 6260 / CBS 566 / DSM 6381 / JCM 1539 / NBRC 10279 / NRRL Y-324) (Yeast).